The sequence spans 1009 residues: Type VII secretion system accessory factor EsaA (1009 aa).

A helical membrane pass occupies residues 7–27 (IYALIVTLIIIIAIVSMIFFV). A compositionally biased stretch (basic and acidic residues) spans 680-697 (TFAEEPQEPKIDKGKNDE). Residues 680–707 (TFAEEPQEPKIDKGKNDEFNTMSSNLDK) form a disordered region. The next 5 membrane-spanning stretches (helical) occupy residues 822 to 842 (ISPT…AYIF), 869 to 889 (VITS…VGLI), 903 to 923 (KFIL…TYLL), 928 to 948 (SIGM…MNNL), and 979 to 999 (IGLV…LNMF).

It belongs to the EsaA family. In terms of assembly, homodimer. Interacts with EssB.

It localises to the cell membrane. In terms of biological role, component of the type VII secretion system (Ess). Provides together with EssB and other components such as EssC and EssE a secretion plateform accross the cytoplasmic membrane in the host. The protein is Type VII secretion system accessory factor EsaA of Staphylococcus aureus (strain USA300).